The following is a 121-amino-acid chain: Large ribosomal subunit protein uL14 (121 aa).

This sequence belongs to the universal ribosomal protein uL14 family. Part of the 50S ribosomal subunit. Forms a cluster with proteins L3 and L19. In the 70S ribosome, L14 and L19 interact and together make contacts with the 16S rRNA in bridges B5 and B8.

Functionally, binds to 23S rRNA. Forms part of two intersubunit bridges in the 70S ribosome. The sequence is that of Large ribosomal subunit protein uL14 from Synechococcus sp. (strain WH7803).